The chain runs to 411 residues: Putative acid phosphatase 10 (411 aa).

H33 acts as the Nucleophile in catalysis. D313 (proton donor) is an active-site residue. The cysteines at positions 379 and 385 are disulfide-linked.

This sequence belongs to the histidine acid phosphatase family.

It carries out the reaction a phosphate monoester + H2O = an alcohol + phosphate. This chain is Putative acid phosphatase 10 (pho-10), found in Caenorhabditis elegans.